Reading from the N-terminus, the 99-residue chain is Nucleoid-associated protein EbfC (99 aa).

The protein belongs to the YbaB/EbfC family. In terms of assembly, homodimer. Can form tetramers and octamers in solution.

Its subcellular location is the cytoplasm. It localises to the nucleoid. In terms of biological role, binds to DNA and alters its conformation. May be involved in global regulation of gene expression. Binds specifically and non-specifically to DNA, preferentially to the 4 bp broken palindrome 5'-GTnAC-3'. Affects expression of a wide variety of genes, encoding both structural and metabolic proteins. This chain is Nucleoid-associated protein EbfC, found in Borreliella burgdorferi (strain ATCC 35210 / DSM 4680 / CIP 102532 / B31) (Borrelia burgdorferi).